The sequence spans 203 residues: Endo-type membrane-bound lytic murein transglycosylase A (203 aa).

An N-terminal signal peptide occupies residues 1-15 (MKLRWFAFLVVLLAG). The N-palmitoyl cysteine moiety is linked to residue C16. C16 carries the S-diacylglycerol cysteine lipid modification.

Belongs to the transglycosylase Slt family.

It is found in the cell outer membrane. It carries out the reaction Endolytic cleavage of the (1-&gt;4)-beta-glycosidic linkage between N-acetylmuramic acid (MurNAc) and N-acetylglucosamine (GlcNAc) residues in peptidoglycan with concomitant formation of a 1,6-anhydrobond in the MurNAc residue.. Murein-degrading enzyme. May play a role in recycling of muropeptides during cell elongation and/or cell division. Preferentially cleaves at a distance of more than two disaccharide units from the ends of the glycan chain. This Escherichia fergusonii (strain ATCC 35469 / DSM 13698 / CCUG 18766 / IAM 14443 / JCM 21226 / LMG 7866 / NBRC 102419 / NCTC 12128 / CDC 0568-73) protein is Endo-type membrane-bound lytic murein transglycosylase A.